The primary structure comprises 264 residues: Thiazole synthase (264 aa).

Catalysis depends on Lys-106, which acts as the Schiff-base intermediate with DXP. Residues Gly-167, 193-194, and 215-216 each bind 1-deoxy-D-xylulose 5-phosphate; these read AG and NS.

This sequence belongs to the ThiG family. In terms of assembly, homotetramer. Forms heterodimers with either ThiH or ThiS.

It localises to the cytoplasm. The enzyme catalyses [ThiS sulfur-carrier protein]-C-terminal-Gly-aminoethanethioate + 2-iminoacetate + 1-deoxy-D-xylulose 5-phosphate = [ThiS sulfur-carrier protein]-C-terminal Gly-Gly + 2-[(2R,5Z)-2-carboxy-4-methylthiazol-5(2H)-ylidene]ethyl phosphate + 2 H2O + H(+). The protein operates within cofactor biosynthesis; thiamine diphosphate biosynthesis. Functionally, catalyzes the rearrangement of 1-deoxy-D-xylulose 5-phosphate (DXP) to produce the thiazole phosphate moiety of thiamine. Sulfur is provided by the thiocarboxylate moiety of the carrier protein ThiS. In vitro, sulfur can be provided by H(2)S. This is Thiazole synthase from Prochlorococcus marinus (strain AS9601).